The primary structure comprises 177 residues: Ribulose bisphosphate carboxylase small subunit, chloroplastic 5 (177 aa).

The transit peptide at 1-56 (MASSMMASTAAVARAGPAQSSMVAPFNGLRSSVAFPATRKANNDLSTLPSNGGRVS) directs the protein to the chloroplast.

This sequence belongs to the RuBisCO small chain family. As to quaternary structure, heterohexadecamer of 8 large and 8 small subunits.

The protein resides in the plastid. It is found in the chloroplast. Functionally, ruBisCO catalyzes two reactions: the carboxylation of D-ribulose 1,5-bisphosphate, the primary event in carbon dioxide fixation, as well as the oxidative fragmentation of the pentose substrate. Both reactions occur simultaneously and in competition at the same active site. Although the small subunit is not catalytic it is essential for maximal activity. This is Ribulose bisphosphate carboxylase small subunit, chloroplastic 5 from Lemna gibba (Swollen duckweed).